Reading from the N-terminus, the 564-residue chain is Proline--tRNA ligase (564 aa).

The protein belongs to the class-II aminoacyl-tRNA synthetase family. ProS type 1 subfamily. In terms of assembly, homodimer.

It localises to the cytoplasm. It carries out the reaction tRNA(Pro) + L-proline + ATP = L-prolyl-tRNA(Pro) + AMP + diphosphate. In terms of biological role, catalyzes the attachment of proline to tRNA(Pro) in a two-step reaction: proline is first activated by ATP to form Pro-AMP and then transferred to the acceptor end of tRNA(Pro). As ProRS can inadvertently accommodate and process non-cognate amino acids such as alanine and cysteine, to avoid such errors it has two additional distinct editing activities against alanine. One activity is designated as 'pretransfer' editing and involves the tRNA(Pro)-independent hydrolysis of activated Ala-AMP. The other activity is designated 'posttransfer' editing and involves deacylation of mischarged Ala-tRNA(Pro). The misacylated Cys-tRNA(Pro) is not edited by ProRS. The chain is Proline--tRNA ligase from Bacillus subtilis (strain 168).